The sequence spans 180 residues: MRILGIDPGLRVTGFGVIDQSGHQLTYVTSGVIKTADADLPTRLGTIFEGISTLIRQHAPDHSAIEKVFVNVNPQSTLLLGQARGAAICGLVSGGVPVAEYTALQLKQAVVGYGRATKEQMQQMVVRLLCLSGIPSTDAADALGMAICHAHGGGTLSTLGGIAPGLAKKGLRVRRGRLVG.

Catalysis depends on residues D7, E66, and D138. Residues D7, E66, and D138 each coordinate Mg(2+).

Belongs to the RuvC family. In terms of assembly, homodimer which binds Holliday junction (HJ) DNA. The HJ becomes 2-fold symmetrical on binding to RuvC with unstacked arms; it has a different conformation from HJ DNA in complex with RuvA. In the full resolvosome a probable DNA-RuvA(4)-RuvB(12)-RuvC(2) complex forms which resolves the HJ. Mg(2+) serves as cofactor.

The protein resides in the cytoplasm. The catalysed reaction is Endonucleolytic cleavage at a junction such as a reciprocal single-stranded crossover between two homologous DNA duplexes (Holliday junction).. Functionally, the RuvA-RuvB-RuvC complex processes Holliday junction (HJ) DNA during genetic recombination and DNA repair. Endonuclease that resolves HJ intermediates. Cleaves cruciform DNA by making single-stranded nicks across the HJ at symmetrical positions within the homologous arms, yielding a 5'-phosphate and a 3'-hydroxyl group; requires a central core of homology in the junction. The consensus cleavage sequence is 5'-(A/T)TT(C/G)-3'. Cleavage occurs on the 3'-side of the TT dinucleotide at the point of strand exchange. HJ branch migration catalyzed by RuvA-RuvB allows RuvC to scan DNA until it finds its consensus sequence, where it cleaves and resolves the cruciform DNA. This is Crossover junction endodeoxyribonuclease RuvC from Paraburkholderia phymatum (strain DSM 17167 / CIP 108236 / LMG 21445 / STM815) (Burkholderia phymatum).